Reading from the N-terminus, the 85-residue chain is RNA-binding protein Hfq (85 aa).

The region spanning 9–68 is the Sm domain; it reads DPFLNALRRERIPVSIYLVNGIKLQGQVESFDQFVILLKNTVSQMVYKHAISTVVPARPV.

This sequence belongs to the Hfq family. In terms of assembly, homohexamer.

Its function is as follows. RNA chaperone that binds small regulatory RNA (sRNAs) and mRNAs to facilitate mRNA translational regulation in response to envelope stress, environmental stress and changes in metabolite concentrations. Also binds with high specificity to tRNAs. The chain is RNA-binding protein Hfq from Tolumonas auensis (strain DSM 9187 / NBRC 110442 / TA 4).